Consider the following 256-residue polypeptide: Photosystem I chlorophyll a/b-binding protein 5, chloroplastic (256 aa).

The N-terminal 32 residues, 1-32 (MAVVLRGGITGGFLHHRRDASSVITRRISSVK), are a transit peptide targeting the chloroplast. At Ala33 the chain carries N-acetylalanine. A chlorophyll b-binding site is contributed by Trp49. Residues Phe69 and Glu88 each contribute to the chlorophyll a site. Arg93 lines the chlorophyll b pocket. The next 2 helical transmembrane spans lie at 94 to 113 (FAMLGVAGILFTDLLRTTGI) and 129 to 146 (FASTKTLIVVQFLLMGFA). Glu147 and Arg150 together coordinate chlorophyll b. Lys205, Glu206, Asn209, Arg211, Gln223, and His238 together coordinate chlorophyll a. A helical membrane pass occupies residues 212-232 (LAMMAMLGFFVQASVTHTGPI).

Belongs to the light-harvesting chlorophyll a/b-binding (LHC) protein family. As to quaternary structure, the LHC complex consists of chlorophyll a-b binding proteins. Homodimer. Heterodimer with LHCA2 and, possibly, LHCA3. Can substitute to LHCA4 to form a complex with LHCA1. Binds pigments. Element of the NAD(P)H dehydrogenase-photosystem I supercomplex (NDH-PSI). Binds at least 14 chlorophylls (8 Chl-a and 6 Chl-b) and carotenoids such as lutein and neoxanthin. is required as a cofactor. Post-translationally, photoregulated by reversible phosphorylation of its threonine residues.

Its subcellular location is the plastid. It localises to the chloroplast thylakoid membrane. Functionally, the light-harvesting complex (LHC) functions as a light receptor, it captures and delivers excitation energy to photosystems with which it is closely associated. Seems involved in the function of the photosystem I in low light conditions, when other LHCA proteins are less abundant. Required, together with LHCA6, for the formation of a full-size NAD(P)H dehydrogenase-photosystem I supercomplex (NDH-PSI) that triggers cyclic and chlororespiratory electron transport in chloroplast thylakoids, especially under stress conditions (e.g. increased light intensity). The chain is Photosystem I chlorophyll a/b-binding protein 5, chloroplastic from Arabidopsis thaliana (Mouse-ear cress).